Here is a 299-residue protein sequence, read N- to C-terminus: uncharacterized protein (299 aa).

A disordered region spans residues 1 to 20 (MTTKHELVINTNEPSAPNAD). A helical transmembrane segment spans residues 172–192 (SFFIPPMVVISTPICLGLTVF).

It belongs to the IIV-6 259R family.

The protein localises to the membrane. This is an uncharacterized protein from Acheta domesticus (House cricket).